The sequence spans 409 residues: Peptidase T (409 aa).

Residue histidine 78 participates in Zn(2+) binding. Aspartate 80 is an active-site residue. Aspartate 140 serves as a coordination point for Zn(2+). The active-site Proton acceptor is the glutamate 173. 3 residues coordinate Zn(2+): glutamate 174, aspartate 196, and histidine 379.

This sequence belongs to the peptidase M20B family. Requires Zn(2+) as cofactor.

The protein localises to the cytoplasm. The enzyme catalyses Release of the N-terminal residue from a tripeptide.. Cleaves the N-terminal amino acid of tripeptides. In Salmonella dublin (strain CT_02021853), this protein is Peptidase T.